Reading from the N-terminus, the 469-residue chain is MPRLPLLLLLLWGTGSHGFPAATSETQEQDVETVKKYLENYYNLNSNGKKVERQRNGGLITEKLKQMQKFFGLRVTGKPDAETLNVMKQPRCGVPDVAPFVLTPGKSCWENTNLTYRIENYTPDLSRADVDQAIEKAFQLWSNVTPLTFTKVSEGQADIMISFVRGDHRDNSPFDGPGGNLAHAFQPGAGIGGDAHFDDDEWWTSNFQDYNLYRVAAHEFGHSLGLAHSTDIGALMYPSYTFSGDVQLSQDDIDGIQAIYGPSQNPTQPVGPQTPEVCDSKLTFDAITTIRGEVMFFKDRFYMRTNPLYPEVELNFISVFWPQLPNGLQAAYEVADRDEVRFFKGNKYWAVKGQDVLRGYPRDIYRSFGFPRTVKSIDAAVSEEDTGKTYFFVANKCWRYDEYKQSMDAGYPKMIAEDFPGIGNKVDAVFQKGGFFYFFHGRRQYKFDPQTKRILTLLKANSWFNCRKN.

A signal peptide spans Met-1–Gly-18. Positions Phe-19–Pro-99 are cleaved as a propeptide — activation peptide. The Cysteine switch signature appears at Pro-90–Val-97. Cys-92 lines the Zn(2+) pocket. N-linked (GlcNAc...) asparagine glycosylation is present at Asn-120. Asp-124 and Asp-158 together coordinate Ca(2+). Zn(2+) is bound by residues His-168 and Asp-170. Positions 175, 176, 178, and 180 each coordinate Ca(2+). His-183 is a binding site for Zn(2+). 3 residues coordinate Ca(2+): Gly-190, Gly-192, and Asp-194. Residue His-196 participates in Zn(2+) binding. Residues Asp-198, Asp-199, and Glu-201 each contribute to the Ca(2+) site. His-218 is a binding site for Zn(2+). Glu-219 is an active-site residue. 2 residues coordinate Zn(2+): His-222 and His-228. Thr-274 bears the Phosphothreonine mark. Hemopexin repeat units follow at residues Pro-275–Leu-324, Pro-325–Pro-371, Val-374–Ile-422, and Gly-423–Cys-466. Cys-278 and Cys-466 form a disulfide bridge. Ca(2+) is bound by residues Asp-285 and Gln-329. At Tyr-360 the chain carries Phosphotyrosine; by PKDCC. Residues Asp-378 and Asp-427 each coordinate Ca(2+).

It belongs to the peptidase M10A family. Ca(2+) serves as cofactor. Requires Zn(2+) as cofactor. Post-translationally, tyrosine phosphorylated in platelets by PKDCC/VLK.

It is found in the secreted. The protein resides in the extracellular space. The protein localises to the extracellular matrix. It catalyses the reaction Cleavage of the triple helix of collagen at about three-quarters of the length of the molecule from the N-terminus, at 775-Gly-|-Ile-776 in the alpha1(I) chain. Cleaves synthetic substrates and alpha-macroglobulins at bonds where P1' is a hydrophobic residue.. Its activity is regulated as follows. Can be activated without removal of the activation peptide. Its function is as follows. Cleaves collagens of types I, II, and III at one site in the helical domain. Also cleaves collagens of types VII and X. The sequence is that of Interstitial collagenase (MMP1) from Bos taurus (Bovine).